The following is a 259-amino-acid chain: Protein SODIUM POTASSIUM ROOT DEFECTIVE 2 (259 aa).

Residues 141 to 165 (PDSITGSVDQDPAKTVEAEAPAGED) are disordered. Positions 151 to 165 (DPAKTVEAEAPAGED) are enriched in basic and acidic residues. Positions 180–246 (QQVVVLKVSL…KVKNAQFWTN (67 aa)) constitute an HMA domain. A metal cation-binding residues include cysteine 191 and cysteine 194.

The polypeptide is Protein SODIUM POTASSIUM ROOT DEFECTIVE 2 (Arabidopsis thaliana (Mouse-ear cress)).